A 352-amino-acid polypeptide reads, in one-letter code: UDP-N-acetylglucosamine--N-acetylmuramyl-(pentapeptide) pyrophosphoryl-undecaprenol N-acetylglucosamine transferase 2 (352 aa).

UDP-N-acetyl-alpha-D-glucosamine-binding positions include 11–13, Arg164, Ser194, and Gln289; that span reads SAG.

This sequence belongs to the glycosyltransferase 28 family. MurG subfamily.

It localises to the cell membrane. It carries out the reaction di-trans,octa-cis-undecaprenyl diphospho-N-acetyl-alpha-D-muramoyl-L-alanyl-D-glutamyl-meso-2,6-diaminopimeloyl-D-alanyl-D-alanine + UDP-N-acetyl-alpha-D-glucosamine = di-trans,octa-cis-undecaprenyl diphospho-[N-acetyl-alpha-D-glucosaminyl-(1-&gt;4)]-N-acetyl-alpha-D-muramoyl-L-alanyl-D-glutamyl-meso-2,6-diaminopimeloyl-D-alanyl-D-alanine + UDP + H(+). The protein operates within cell wall biogenesis; peptidoglycan biosynthesis. Its function is as follows. Cell wall formation. Catalyzes the transfer of a GlcNAc subunit on undecaprenyl-pyrophosphoryl-MurNAc-pentapeptide (lipid intermediate I) to form undecaprenyl-pyrophosphoryl-MurNAc-(pentapeptide)GlcNAc (lipid intermediate II). The chain is UDP-N-acetylglucosamine--N-acetylmuramyl-(pentapeptide) pyrophosphoryl-undecaprenol N-acetylglucosamine transferase 2 from Bacillus cereus (strain ATCC 14579 / DSM 31 / CCUG 7414 / JCM 2152 / NBRC 15305 / NCIMB 9373 / NCTC 2599 / NRRL B-3711).